We begin with the raw amino-acid sequence, 449 residues long: MRECISVHVGQAGVQMGNACWELYCLEHGIQPDGQMPSDKTIGGGDDSFTTFFSETGAGKHVPRAVFVDLEPTVIDEVRAGTYRQLFHPEQLITGKEDAANNYARGHYTIGKEIIDPVLDRIRKLADQCTGLQGFLVFHSFGGGTGSGFTSLLMERLSVDYGKKSKLEFSIYPAPQVSTAVVEPYNSILTTHTTLEHSDCAFMVDNEAIYDICRRNLDIERPTYTNLNRLISQIVSSITASLRFDGALNVDLTEFQTNLVPYPRIHFPLATYAPVISAEKAYHEQLSVSEITNACFEPANQMVKCDPRHGKYMACCLLYRGDVVPKDVNAAIAAIKTKRTIQFVDWCPTGFKVGINYQPPTAVPGGDLAKVQRAVCMLSNTTAIAEAWARLDHKFDLMYAKRAFVHWYVGEGMEEGEFSEAREDMAALEKDYEEVGIDSYEDEDEGEEY.

An MREC motif motif is present at residues 1–4 (MREC). Residue Gln-11 coordinates GTP. N6-acetyllysine is present on Lys-40. Glu-71, Ser-140, Gly-144, Thr-145, Thr-179, Asn-206, and Asn-228 together coordinate GTP. A Mg(2+)-binding site is contributed by Glu-71. The active site involves Glu-254. The residue at position 443 (Glu-443) is a 5-glutamyl polyglutamate.

The protein belongs to the tubulin family. In terms of assembly, dimer of alpha and beta chains. A typical microtubule is a hollow water-filled tube with an outer diameter of 25 nm and an inner diameter of 15 nM. Alpha-beta heterodimers associate head-to-tail to form protofilaments running lengthwise along the microtubule wall with the beta-tubulin subunit facing the microtubule plus end conferring a structural polarity. Microtubules usually have 13 protofilaments but different protofilament numbers can be found in some organisms and specialized cells. Mg(2+) serves as cofactor. Post-translationally, some glutamate residues at the C-terminus are polyglycylated, resulting in polyglycine chains on the gamma-carboxyl group. Glycylation is mainly limited to tubulin incorporated into axonemes (cilia and flagella) whereas glutamylation is prevalent in neuronal cells, centrioles, axonemes, and the mitotic spindle. Both modifications can coexist on the same protein on adjacent residues, and lowering polyglycylation levels increases polyglutamylation, and reciprocally. The precise function of polyglycylation is still unclear. In terms of processing, some glutamate residues at the C-terminus are polyglutamylated, resulting in polyglutamate chains on the gamma-carboxyl group. Polyglutamylation plays a key role in microtubule severing by spastin (SPAST). SPAST preferentially recognizes and acts on microtubules decorated with short polyglutamate tails: severing activity by SPAST increases as the number of glutamates per tubulin rises from one to eight, but decreases beyond this glutamylation threshold. Acetylation of alpha chains at Lys-40 is located inside the microtubule lumen. This modification has been correlated with increased microtubule stability, intracellular transport and ciliary assembly. Post-translationally, undergoes a tyrosination/detyrosination cycle, the cyclic removal and re-addition of a C-terminal tyrosine residue by the enzymes tubulin tyrosine carboxypeptidase (MATCAP1, VASH1 or VASH2) and tubulin tyrosine ligase (TTL), respectively. In terms of processing, tyrosination promotes microtubule interaction with CAP-Gly microtubule plus-end tracking proteins. Tyrosinated tubulins regulate the initiation of dynein-driven motility. Detyrosination is involved in metaphase plate congression by guiding chromosomes during mitosis. Detyrosination increases microtubules-dependent mechanotransduction in dystrophic cardiac and skeletal muscle. In cardiomyocytes, detyrosinated microtubules are required to resist to contractile compression during contraction.

The protein localises to the cytoplasm. The protein resides in the cytoskeleton. The enzyme catalyses GTP + H2O = GDP + phosphate + H(+). Its function is as follows. Tubulin is the major constituent of microtubules, a cylinder consisting of laterally associated linear protofilaments composed of alpha- and beta-tubulin heterodimers. Microtubules grow by the addition of GTP-tubulin dimers to the microtubule end, where a stabilizing cap forms. Below the cap, tubulin dimers are in GDP-bound state, owing to GTPase activity of alpha-tubulin. This chain is Tubulin alpha chain (tuba), found in Xenopus tropicalis (Western clawed frog).